The following is a 153-amino-acid chain: ORM1-like protein 3 (153 aa).

Positions 1–17 (MNVGTAHSEVNPNTRVM) are important for ceramide level-sensing. Over 1 to 21 (MNVGTAHSEVNPNTRVMNSRG) the chain is Cytoplasmic. Transmembrane regions (helical) follow at residues 22-44 (IWLS…PFVS) and 45-63 (VPVV…MYIF). Residues 64–100 (LHTVKGTPFETPDQGKARLLTHWEQMDYGVQFTASRK) lie on the Cytoplasmic side of the membrane. The helical transmembrane segment at 101–117 (FLTITPIVLYFLTSFYT) threads the bilayer. Topologically, residues 118-121 (KYDQ) are lumenal. The chain crosses the membrane as a helical span at residues 122-139 (IHFVLNTVSLMSVLIPKL). A Hydroxyproline modification is found at Pro137. At 140–153 (PQLHGVRIFGINKY) the chain is on the cytoplasmic side.

The protein belongs to the ORM family. In terms of assembly, ceramide-sensitive subunit of the serine palmitoyltransferase (SPT) complex, which is also composed of SPTLC1, SPTLC2/3 and SPTSSA/B. When hydroxylated at Pro-137, ubiquitinated via 'Lys-48'-linkage, leading to proteasomal degradation. In endothelial cells, ORMDL3 proteasomal degradation is controlled by the sphingosine 1-phosphate receptor signaling pathway. Widely expressed. Expressed in adult and fetal heart, brain, lung, liver, skeletal muscle and kidney. Expressed in adult pancreas and placenta and in fetal spleen and thymus.

It localises to the endoplasmic reticulum membrane. Its function is as follows. Plays an essential role in the homeostatic regulation of sphingolipid de novo biosynthesis by modulating the activity of the serine palmitoyltransferase (SPT) in response to ceramide levels. When complexed to SPT, the binding of ceramides to its N-terminus stabilizes a conformation that block SPT substrate entry, hence preventing SPT catalytic activity. Through this mechanism, maintains ceramide levels at sufficient concentrations for the production of complex sphingolipids, but which prevents the accumulation of ceramides to levels that trigger apoptosis. The chain is ORM1-like protein 3 (ORMDL3) from Homo sapiens (Human).